A 32-amino-acid chain; its full sequence is Cytochrome b6-f complex subunit 6 (32 aa).

Residues 6 to 26 (VFYIVFIALFFGIAVGIIFAI) traverse the membrane as a helical segment.

This sequence belongs to the PetL family. The 4 large subunits of the cytochrome b6-f complex are cytochrome b6, subunit IV (17 kDa polypeptide, PetD), cytochrome f and the Rieske protein, while the 4 small subunits are PetG, PetL, PetM and PetN. The complex functions as a dimer.

It is found in the cellular thylakoid membrane. Its function is as follows. Component of the cytochrome b6-f complex, which mediates electron transfer between photosystem II (PSII) and photosystem I (PSI), cyclic electron flow around PSI, and state transitions. PetL is important for photoautotrophic growth as well as for electron transfer efficiency and stability of the cytochrome b6-f complex. In Mastigocladus laminosus (Fischerella sp.), this protein is Cytochrome b6-f complex subunit 6.